Here is a 137-residue protein sequence, read N- to C-terminus: Large ribosomal subunit protein uL16 (137 aa).

This sequence belongs to the universal ribosomal protein uL16 family. As to quaternary structure, part of the 50S ribosomal subunit.

In terms of biological role, binds 23S rRNA and is also seen to make contacts with the A and possibly P site tRNAs. This Streptococcus equi subsp. zooepidemicus (strain H70) protein is Large ribosomal subunit protein uL16.